The sequence spans 123 residues: MASSFSRWLVDPKKNPLAAIHMKTLSSRLRNYGLRHDDLYDPMYDLDVKEALNRLPREIVDARNQRLLRAMDLSMKHQYLPEDLQAMQTPFRNYLQEMLALVKRESAEREALGALPLYQRTLP.

The protein belongs to the UQCRB/QCR7 family. Component of the ubiquinol-cytochrome c oxidoreductase (cytochrome b-c1 complex, complex III, CIII), a multisubunit enzyme composed of 3 respiratory subunits cytochrome b, cytochrome c1 and Rieske protein, 2 core protein subunits, and additional low-molecular weight protein subunits. The complex exists as an obligatory dimer and forms supercomplexes (SCs) in the inner mitochondrial membrane with cytochrome c oxidase (complex IV, CIV). The N-terminus is blocked.

The protein resides in the mitochondrion inner membrane. Its function is as follows. Component of the ubiquinol-cytochrome c oxidoreductase, a multisubunit transmembrane complex that is part of the mitochondrial electron transport chain which drives oxidative phosphorylation. The respiratory chain contains 3 multisubunit complexes succinate dehydrogenase (complex II, CII), ubiquinol-cytochrome c oxidoreductase (cytochrome b-c1 complex, complex III, CIII) and cytochrome c oxidase (complex IV, CIV), that cooperate to transfer electrons derived from NADH and succinate to molecular oxygen, creating an electrochemical gradient over the inner membrane that drives transmembrane transport and the ATP synthase. The cytochrome b-c1 complex catalyzes electron transfer from ubiquinol to cytochrome c, linking this redox reaction to translocation of protons across the mitochondrial inner membrane, with protons being carried across the membrane as hydrogens on the quinol. In the process called Q cycle, 2 protons are consumed from the matrix, 4 protons are released into the intermembrane space and 2 electrons are passed to cytochrome c. This is Cytochrome b-c1 complex subunit 7 from Solanum tuberosum (Potato).